The following is a 288-amino-acid chain: Bifunctional protein FolD (288 aa).

Residues glycine 164–serine 166, serine 193, and isoleucine 234 contribute to the NADP(+) site.

The protein belongs to the tetrahydrofolate dehydrogenase/cyclohydrolase family. In terms of assembly, homodimer.

The enzyme catalyses (6R)-5,10-methylene-5,6,7,8-tetrahydrofolate + NADP(+) = (6R)-5,10-methenyltetrahydrofolate + NADPH. The catalysed reaction is (6R)-5,10-methenyltetrahydrofolate + H2O = (6R)-10-formyltetrahydrofolate + H(+). It participates in one-carbon metabolism; tetrahydrofolate interconversion. Catalyzes the oxidation of 5,10-methylenetetrahydrofolate to 5,10-methenyltetrahydrofolate and then the hydrolysis of 5,10-methenyltetrahydrofolate to 10-formyltetrahydrofolate. The polypeptide is Bifunctional protein FolD (Nitratidesulfovibrio vulgaris (strain DSM 19637 / Miyazaki F) (Desulfovibrio vulgaris)).